Here is a 356-residue protein sequence, read N- to C-terminus: Cyanide hydratase (356 aa).

Positions 15-290 (FKVAAVQAEP…EVVLYANISL (276 aa)) constitute a CN hydrolase domain. E55 functions as the Proton acceptor in the catalytic mechanism. The active site involves K137. C172 (nucleophile) is an active-site residue. The interval 331 to 356 (DEQAASKAQQAEIDNAGKGSIVPSKL) is disordered.

This sequence belongs to the carbon-nitrogen hydrolase superfamily. Nitrilase family.

The catalysed reaction is formamide = hydrogen cyanide + H2O. Functionally, catalyzes the hydration of cyanide to formamide. Degradation of cyanide may be important for plant pathogenic fungi in infection of cyanogenic plants. This is Cyanide hydratase from Armillaria gallica (Bulbous honey fungus).